The sequence spans 145 residues: Flagellar assembly factor FliW (145 aa).

The protein belongs to the FliW family. As to quaternary structure, interacts with translational regulator CsrA and flagellin(s).

It localises to the cytoplasm. Acts as an anti-CsrA protein, binds CsrA and prevents it from repressing translation of its target genes, one of which is flagellin. Binds to flagellin and participates in the assembly of the flagellum. In Exiguobacterium sp. (strain ATCC BAA-1283 / AT1b), this protein is Flagellar assembly factor FliW.